A 301-amino-acid chain; its full sequence is Homoserine O-acetyltransferase (301 aa).

The active-site Acyl-thioester intermediate is the Cys142. Residues Lys163 and Ser192 each coordinate substrate. His235 functions as the Proton acceptor in the catalytic mechanism. Glu237 is an active-site residue. Arg249 is a substrate binding site.

The protein belongs to the MetA family.

Its subcellular location is the cytoplasm. The catalysed reaction is L-homoserine + acetyl-CoA = O-acetyl-L-homoserine + CoA. The protein operates within amino-acid biosynthesis; L-methionine biosynthesis via de novo pathway; O-acetyl-L-homoserine from L-homoserine: step 1/1. Functionally, transfers an acetyl group from acetyl-CoA to L-homoserine, forming acetyl-L-homoserine. The protein is Homoserine O-acetyltransferase of Bacillus mycoides (strain KBAB4) (Bacillus weihenstephanensis).